Reading from the N-terminus, the 300-residue chain is Acetylglutamate kinase (300 aa).

Substrate-binding positions include 69–70 (GG), Arg-91, and Asn-197.

It belongs to the acetylglutamate kinase family. ArgB subfamily.

It localises to the cytoplasm. It catalyses the reaction N-acetyl-L-glutamate + ATP = N-acetyl-L-glutamyl 5-phosphate + ADP. It functions in the pathway amino-acid biosynthesis; L-arginine biosynthesis; N(2)-acetyl-L-ornithine from L-glutamate: step 2/4. Its function is as follows. Catalyzes the ATP-dependent phosphorylation of N-acetyl-L-glutamate. This chain is Acetylglutamate kinase, found in Kineococcus radiotolerans (strain ATCC BAA-149 / DSM 14245 / SRS30216).